A 141-amino-acid polypeptide reads, in one-letter code: Hemoglobin subunit alpha-D (141 aa).

Positions 1–141 constitute a Globin domain; the sequence is VLTAEDRRLL…VADVLCEKYR (141 aa). Residues glutamine 58 and histidine 87 each contribute to the heme b site.

This sequence belongs to the globin family. As to quaternary structure, heterotetramer of two alpha chains and two beta chains. As to expression, red blood cells.

Involved in oxygen transport from the lung to the various peripheral tissues. The chain is Hemoglobin subunit alpha-D from Drymarchon melanurus erebennus (Texas indigo snake).